A 188-amino-acid chain; its full sequence is Josephin-2 (188 aa).

The region spanning 11–188 (PPSVYHERQR…EEAGCWLNTS (178 aa)) is the Josephin domain. C24 functions as the Nucleophile in the catalytic mechanism. Residue H125 is the Proton acceptor of the active site.

It is found in the cytoplasm. Its subcellular location is the cytosol. It catalyses the reaction Thiol-dependent hydrolysis of ester, thioester, amide, peptide and isopeptide bonds formed by the C-terminal Gly of ubiquitin (a 76-residue protein attached to proteins as an intracellular targeting signal).. Functionally, cleaves 'Lys-63'-linked poly-ubiquitin chains, and with lesser efficiency 'Lys-48'-linked poly-ubiquitin chains (in vitro). May act as a deubiquitinating enzyme. The sequence is that of Josephin-2 (Josd2) from Mus musculus (Mouse).